Consider the following 254-residue polypeptide: Alcohol dehydrogenase 2 (254 aa).

10–33 (FVAGLGGIGFDTSREIVKSGPKNL) is an NAD(+) binding site. Residue S138 participates in substrate binding. The active-site Proton acceptor is the Y151.

This sequence belongs to the short-chain dehydrogenases/reductases (SDR) family. Homodimer.

The catalysed reaction is a primary alcohol + NAD(+) = an aldehyde + NADH + H(+). It carries out the reaction a secondary alcohol + NAD(+) = a ketone + NADH + H(+). This chain is Alcohol dehydrogenase 2 (Adh2), found in Drosophila buzzatii (Fruit fly).